A 336-amino-acid chain; its full sequence is Sulfate/thiosulfate import ATP-binding protein CysA (336 aa).

The ABC transporter domain maps to 3-233; the sequence is ITIENVSKSF…PASPFVMSFI (231 aa). 35-42 contributes to the ATP binding site; it reads GPSGSGKS.

It belongs to the ABC transporter superfamily. Sulfate/tungstate importer (TC 3.A.1.6) family. The complex is composed of two ATP-binding proteins (CysA), two transmembrane proteins (CysT and CysW) and a solute-binding protein (CysP).

The protein resides in the cell inner membrane. It catalyses the reaction sulfate(out) + ATP + H2O = sulfate(in) + ADP + phosphate + H(+). It carries out the reaction thiosulfate(out) + ATP + H2O = thiosulfate(in) + ADP + phosphate + H(+). Functionally, part of the ABC transporter complex CysAWTP involved in sulfate/thiosulfate import. Responsible for energy coupling to the transport system. The protein is Sulfate/thiosulfate import ATP-binding protein CysA of Thermosynechococcus vestitus (strain NIES-2133 / IAM M-273 / BP-1).